Consider the following 421-residue polypeptide: Gamma-glutamyl phosphate reductase (421 aa).

It belongs to the gamma-glutamyl phosphate reductase family.

It localises to the cytoplasm. It catalyses the reaction L-glutamate 5-semialdehyde + phosphate + NADP(+) = L-glutamyl 5-phosphate + NADPH + H(+). It functions in the pathway amino-acid biosynthesis; L-proline biosynthesis; L-glutamate 5-semialdehyde from L-glutamate: step 2/2. Functionally, catalyzes the NADPH-dependent reduction of L-glutamate 5-phosphate into L-glutamate 5-semialdehyde and phosphate. The product spontaneously undergoes cyclization to form 1-pyrroline-5-carboxylate. The sequence is that of Gamma-glutamyl phosphate reductase from Pseudomonas aeruginosa (strain ATCC 15692 / DSM 22644 / CIP 104116 / JCM 14847 / LMG 12228 / 1C / PRS 101 / PAO1).